The primary structure comprises 216 residues: Thiamine-phosphate synthase (216 aa).

Residues Gln-37 to Lys-41 and Asp-68 each bind 4-amino-2-methyl-5-(diphosphooxymethyl)pyrimidine. Positions 69 and 93 each coordinate Mg(2+). Thr-112 contacts 4-amino-2-methyl-5-(diphosphooxymethyl)pyrimidine. Thr-140–Thr-142 lines the 2-[(2R,5Z)-2-carboxy-4-methylthiazol-5(2H)-ylidene]ethyl phosphate pocket. Lys-143 contacts 4-amino-2-methyl-5-(diphosphooxymethyl)pyrimidine.

It belongs to the thiamine-phosphate synthase family. Mg(2+) is required as a cofactor.

It carries out the reaction 2-[(2R,5Z)-2-carboxy-4-methylthiazol-5(2H)-ylidene]ethyl phosphate + 4-amino-2-methyl-5-(diphosphooxymethyl)pyrimidine + 2 H(+) = thiamine phosphate + CO2 + diphosphate. It catalyses the reaction 2-(2-carboxy-4-methylthiazol-5-yl)ethyl phosphate + 4-amino-2-methyl-5-(diphosphooxymethyl)pyrimidine + 2 H(+) = thiamine phosphate + CO2 + diphosphate. The catalysed reaction is 4-methyl-5-(2-phosphooxyethyl)-thiazole + 4-amino-2-methyl-5-(diphosphooxymethyl)pyrimidine + H(+) = thiamine phosphate + diphosphate. It participates in cofactor biosynthesis; thiamine diphosphate biosynthesis; thiamine phosphate from 4-amino-2-methyl-5-diphosphomethylpyrimidine and 4-methyl-5-(2-phosphoethyl)-thiazole: step 1/1. Condenses 4-methyl-5-(beta-hydroxyethyl)thiazole monophosphate (THZ-P) and 2-methyl-4-amino-5-hydroxymethyl pyrimidine pyrophosphate (HMP-PP) to form thiamine monophosphate (TMP). This is Thiamine-phosphate synthase from Corynebacterium efficiens (strain DSM 44549 / YS-314 / AJ 12310 / JCM 11189 / NBRC 100395).